A 257-amino-acid polypeptide reads, in one-letter code: Uroporphyrinogen-III C-methyltransferase (257 aa).

S-adenosyl-L-homocysteine-binding positions include Pro-11, 87-89 (GGD), 117-118 (TS), and Met-170.

The protein belongs to the precorrin methyltransferase family.

It catalyses the reaction uroporphyrinogen III + 2 S-adenosyl-L-methionine = precorrin-2 + 2 S-adenosyl-L-homocysteine + H(+). The protein operates within cofactor biosynthesis; adenosylcobalamin biosynthesis; precorrin-2 from uroporphyrinogen III: step 1/1. It functions in the pathway porphyrin-containing compound metabolism; siroheme biosynthesis; precorrin-2 from uroporphyrinogen III: step 1/1. Catalyzes the two successive C-2 and C-7 methylation reactions involved in the conversion of uroporphyrinogen III to precorrin-2 via the intermediate formation of precorrin-1. It is a step in the biosynthesis of both cobalamin (vitamin B12) and siroheme. The sequence is that of Uroporphyrinogen-III C-methyltransferase (sumT) from Bacillus subtilis (strain 168).